Consider the following 464-residue polypeptide: Argininosuccinate lyase (464 aa).

The protein belongs to the lyase 1 family. Argininosuccinate lyase subfamily.

Its subcellular location is the cytoplasm. The enzyme catalyses 2-(N(omega)-L-arginino)succinate = fumarate + L-arginine. It participates in amino-acid biosynthesis; L-arginine biosynthesis; L-arginine from L-ornithine and carbamoyl phosphate: step 3/3. Its activity is regulated as follows. Strongly inhibited by L-arginine. Inhibitory effects are lowered at pH 7.0 compared to those at pH 8.0. At 37 degrees Celsius and pH 7.5, activity decreases to 73% and 31% in the presence of 1 mM and 10 mM arginine, respectively. Activity also decreases to 84%, 93%, 82% and 85% in the presence of 10 mM sodium citrate, citrulline, asparatate and glutamate, respectively. Activity decreases to 96% in presence of 1 mM L-lysine. In terms of biological role, catalyzes the last step of arginine biosynthesis, the conversion of argininosuccinate into L-arginine and fumarate. The sequence is that of Argininosuccinate lyase from Arthrospira platensis (strain NIES-39 / UTEX 3086 / IAM M-135) (Spirulina platensis).